Here is a 190-residue protein sequence, read N- to C-terminus: Large ribosomal subunit protein uL5 (190 aa).

Belongs to the universal ribosomal protein uL5 family. As to quaternary structure, part of the 50S ribosomal subunit; part of the 5S rRNA/L5/L18/L25 subcomplex. Contacts the 5S rRNA and the P site tRNA. Forms a bridge to the 30S subunit in the 70S ribosome.

This is one of the proteins that bind and probably mediate the attachment of the 5S RNA into the large ribosomal subunit, where it forms part of the central protuberance. In the 70S ribosome it contacts protein S13 of the 30S subunit (bridge B1b), connecting the 2 subunits; this bridge is implicated in subunit movement. Contacts the P site tRNA; the 5S rRNA and some of its associated proteins might help stabilize positioning of ribosome-bound tRNAs. The sequence is that of Large ribosomal subunit protein uL5 from Corynebacterium efficiens (strain DSM 44549 / YS-314 / AJ 12310 / JCM 11189 / NBRC 100395).